The following is a 107-amino-acid chain: Putative protein RFPL3S (107 aa).

Strongly expressed in the testis and weakly in brain, placenta and pancreas.

The chain is Putative protein RFPL3S (RFPL3S) from Homo sapiens (Human).